We begin with the raw amino-acid sequence, 86 residues long: Large ribosomal subunit protein uL23 (86 aa).

The protein belongs to the universal ribosomal protein uL23 family. As to quaternary structure, part of the 50S ribosomal subunit. Contacts protein L29.

Functionally, binds to 23S rRNA. One of the proteins that surrounds the polypeptide exit tunnel on the outside of the ribosome. The chain is Large ribosomal subunit protein uL23 from Methanococcus maripaludis (strain C5 / ATCC BAA-1333).